The following is a 413-amino-acid chain: Arginine biosynthesis bifunctional protein ArgJ 1 (413 aa).

Substrate is bound by residues Thr154, Lys180, Thr191, Glu277, Asn408, and Thr413. Thr191 (nucleophile) is an active-site residue.

Belongs to the ArgJ family. As to quaternary structure, heterotetramer of two alpha and two beta chains.

The protein resides in the cytoplasm. The enzyme catalyses N(2)-acetyl-L-ornithine + L-glutamate = N-acetyl-L-glutamate + L-ornithine. It catalyses the reaction L-glutamate + acetyl-CoA = N-acetyl-L-glutamate + CoA + H(+). It functions in the pathway amino-acid biosynthesis; L-arginine biosynthesis; L-ornithine and N-acetyl-L-glutamate from L-glutamate and N(2)-acetyl-L-ornithine (cyclic): step 1/1. The protein operates within amino-acid biosynthesis; L-arginine biosynthesis; N(2)-acetyl-L-ornithine from L-glutamate: step 1/4. Functionally, catalyzes two activities which are involved in the cyclic version of arginine biosynthesis: the synthesis of N-acetylglutamate from glutamate and acetyl-CoA as the acetyl donor, and of ornithine by transacetylation between N(2)-acetylornithine and glutamate. This is Arginine biosynthesis bifunctional protein ArgJ 1 from Nostoc sp. (strain PCC 7120 / SAG 25.82 / UTEX 2576).